Here is an 88-residue protein sequence, read N- to C-terminus: UPF0213 protein SAG0778 (88 aa).

One can recognise a GIY-YIG domain in the interval 4–80; it reads VPAYMYVLEC…QKTRQAKLTY (77 aa).

It belongs to the UPF0213 family.

The polypeptide is UPF0213 protein SAG0778 (Streptococcus agalactiae serotype V (strain ATCC BAA-611 / 2603 V/R)).